Here is a 223-residue protein sequence, read N- to C-terminus: Large ribosomal subunit protein uL3 (223 aa).

The protein belongs to the universal ribosomal protein uL3 family. Part of the 50S ribosomal subunit. Forms a cluster with proteins L14 and L19.

One of the primary rRNA binding proteins, it binds directly near the 3'-end of the 23S rRNA, where it nucleates assembly of the 50S subunit. This is Large ribosomal subunit protein uL3 from Mycoplasma capricolum subsp. capricolum (strain California kid / ATCC 27343 / NCTC 10154).